The following is a 201-amino-acid chain: UPF0301 protein MMAR_0053 (201 aa).

The protein belongs to the UPF0301 (AlgH) family.

This Mycobacterium marinum (strain ATCC BAA-535 / M) protein is UPF0301 protein MMAR_0053.